The sequence spans 148 residues: MKVVFLKDVKGKGKKGEIKNVADGYAQNFLIKNGYAAEANAQALSQLDGQKKLEAKNAAAELAEAQALKEKLETLTVELKAKSGEGGRLFGSVSTKQIADALQKVHGIKIDKRKMTLNDGIRALGFTNVPVKLHHEVTATLKVHVTEE.

This sequence belongs to the bacterial ribosomal protein bL9 family.

In terms of biological role, binds to the 23S rRNA. This Lysinibacillus sphaericus (strain C3-41) protein is Large ribosomal subunit protein bL9.